The primary structure comprises 342 residues: S-adenosylmethionine:tRNA ribosyltransferase-isomerase (342 aa).

This sequence belongs to the QueA family. Monomer.

Its subcellular location is the cytoplasm. The enzyme catalyses 7-aminomethyl-7-carbaguanosine(34) in tRNA + S-adenosyl-L-methionine = epoxyqueuosine(34) in tRNA + adenine + L-methionine + 2 H(+). Its pathway is tRNA modification; tRNA-queuosine biosynthesis. Its function is as follows. Transfers and isomerizes the ribose moiety from AdoMet to the 7-aminomethyl group of 7-deazaguanine (preQ1-tRNA) to give epoxyqueuosine (oQ-tRNA). The polypeptide is S-adenosylmethionine:tRNA ribosyltransferase-isomerase (Listeria monocytogenes serotype 4b (strain CLIP80459)).